The following is a 366-amino-acid chain: UDP-N-acetylglucosamine--N-acetylmuramyl-(pentapeptide) pyrophosphoryl-undecaprenol N-acetylglucosamine transferase (366 aa).

UDP-N-acetyl-alpha-D-glucosamine is bound by residues 10–12 (TGG), Asn124, Arg166, Ser196, and Gln296.

This sequence belongs to the glycosyltransferase 28 family. MurG subfamily.

The protein localises to the cell membrane. The catalysed reaction is di-trans,octa-cis-undecaprenyl diphospho-N-acetyl-alpha-D-muramoyl-L-alanyl-D-glutamyl-meso-2,6-diaminopimeloyl-D-alanyl-D-alanine + UDP-N-acetyl-alpha-D-glucosamine = di-trans,octa-cis-undecaprenyl diphospho-[N-acetyl-alpha-D-glucosaminyl-(1-&gt;4)]-N-acetyl-alpha-D-muramoyl-L-alanyl-D-glutamyl-meso-2,6-diaminopimeloyl-D-alanyl-D-alanine + UDP + H(+). It functions in the pathway cell wall biogenesis; peptidoglycan biosynthesis. Cell wall formation. Catalyzes the transfer of a GlcNAc subunit on undecaprenyl-pyrophosphoryl-MurNAc-pentapeptide (lipid intermediate I) to form undecaprenyl-pyrophosphoryl-MurNAc-(pentapeptide)GlcNAc (lipid intermediate II). This Alkaliphilus oremlandii (strain OhILAs) (Clostridium oremlandii (strain OhILAs)) protein is UDP-N-acetylglucosamine--N-acetylmuramyl-(pentapeptide) pyrophosphoryl-undecaprenol N-acetylglucosamine transferase.